The following is a 201-amino-acid chain: Small ribosomal subunit protein uS10m (201 aa).

This sequence belongs to the universal ribosomal protein uS10 family. Component of the mitochondrial ribosome small subunit (28S) which comprises a 12S rRNA and about 30 distinct proteins.

It localises to the mitochondrion. This is Small ribosomal subunit protein uS10m (MRPS10) from Pongo abelii (Sumatran orangutan).